Here is a 678-residue protein sequence, read N- to C-terminus: DNA ligase (678 aa).

Residues 35-39, 84-85, and Glu116 contribute to the NAD(+) site; these read DSVYD and SL. The active-site N6-AMP-lysine intermediate is the Lys118. Arg139, Glu178, Lys297, and Lys321 together coordinate NAD(+). Residues Cys415, Cys418, Cys433, and Cys438 each coordinate Zn(2+). The 79-residue stretch at 600-678 folds into the BRCT domain; that stretch reads DGNQIFAGKT…EAQLLEMLNE (79 aa).

It belongs to the NAD-dependent DNA ligase family. LigA subfamily. The cofactor is Mg(2+). Mn(2+) serves as cofactor.

The catalysed reaction is NAD(+) + (deoxyribonucleotide)n-3'-hydroxyl + 5'-phospho-(deoxyribonucleotide)m = (deoxyribonucleotide)n+m + AMP + beta-nicotinamide D-nucleotide.. Its function is as follows. DNA ligase that catalyzes the formation of phosphodiester linkages between 5'-phosphoryl and 3'-hydroxyl groups in double-stranded DNA using NAD as a coenzyme and as the energy source for the reaction. It is essential for DNA replication and repair of damaged DNA. In Nostoc punctiforme (strain ATCC 29133 / PCC 73102), this protein is DNA ligase.